We begin with the raw amino-acid sequence, 415 residues long: Multidrug resistance protein MdtA (415 aa).

The N-terminal stretch at 1 to 21 (MKGSYKSRWVIVIVVVIAAIA) is a signal peptide. Residues 31–47 (DSQSAAPGATKQAQQSP) are compositionally biased toward polar residues. Disordered stretches follow at residues 31 to 56 (DSQS…GMRA) and 390 to 415 (VVET…GARS). Basic and acidic residues predominate over residues 399 to 415 (PEEKATSREYAKKGARS).

It belongs to the membrane fusion protein (MFP) (TC 8.A.1) family. In terms of assembly, part of a tripartite efflux system composed of MdtA, MdtB and MdtC.

Its subcellular location is the cell inner membrane. In terms of biological role, the MdtABC tripartite complex confers resistance against novobiocin and deoxycholate. The polypeptide is Multidrug resistance protein MdtA (Escherichia coli O6:H1 (strain CFT073 / ATCC 700928 / UPEC)).